The following is a 59-amino-acid chain: Small ribosomal subunit protein eS17 (59 aa).

It belongs to the eukaryotic ribosomal protein eS17 family.

In Halobacterium salinarum (strain ATCC 29341 / DSM 671 / R1), this protein is Small ribosomal subunit protein eS17.